A 658-amino-acid chain; its full sequence is Glycogen debranching enzyme (658 aa).

Aspartate 336 acts as the Nucleophile in catalysis. Glutamate 371 functions as the Proton donor in the catalytic mechanism.

It belongs to the glycosyl hydrolase 13 family.

The catalysed reaction is Hydrolysis of (1-&gt;6)-alpha-D-glucosidic linkages to branches with degrees of polymerization of three or four glucose residues in limit dextrin.. It functions in the pathway glycan degradation; glycogen degradation. In terms of biological role, removes maltotriose and maltotetraose chains that are attached by 1,6-alpha-linkage to the limit dextrin main chain, generating a debranched limit dextrin. The sequence is that of Glycogen debranching enzyme from Klebsiella pneumoniae (strain 342).